The primary structure comprises 219 residues: Bacterial microcompartment shell protein EutL (219 aa).

BMC circularly permuted domains follow at residues 1 to 113 (MPAL…GAAF) and 114 to 215 (QWAN…ARNP). Asp45, Asp46, Glu83, and Phe113 together coordinate ethanolamine. Residues 45-46 (DD) form a part of the acidic patch lining the small pore region. Glu157 provides a ligand contact to Zn(2+). 183 to 185 (TNY) contributes to the ethanolamine binding site.

Belongs to the EutL/PduB family. In terms of assembly, homotrimerizes to form a pseudohexamer. The trimers form a two-dimensional array about 37 Angstroms thick.

The protein resides in the bacterial microcompartment. The protein operates within amine and polyamine degradation; ethanolamine degradation. Its function is as follows. A component of the bacterial microcompartment (BMC) shell dedicated to ethanolamine degradation. Two crystal forms have been seen; a form with a closed central pore that has 3 very small (1.1-2.2 Angstroms) channels per trimer lined by acidic and aromatic residues. A form with a large central pore (8-12 Angstroms) has also been seen; this is probably a functional pore which allows molecules to enter and exit the BMC in a selective, gated manner. Another group only sees the central pore in the presence of Zn(2+); soaking crystals in ZnCl(2) leads to dramatic conformational changes that open a central pore of about 12 Angstroms. Whether Zn(2+) binding is physiologically relevant is unclear, however it suggests a gating mechanism exists. Ethanolamine-binding by the small channels has been hypothesized to stabilize the EutL central pore in a closed (non-transporting) state. An open pore is thought to be large enough to transport ATP and/or cobalamin. This chain is Bacterial microcompartment shell protein EutL (eutL), found in Escherichia coli (strain K12).